The sequence spans 509 residues: MVLDANIKAQLNQYMQLIENDIVLKVSAGEDDTSKDMLALVDELASMSSKISVEKAELNRTPSFSVNRVGEDTGVTFAGIPLGHEFTSLVLALLQVSGRPPKVDQKVIDQVKKISGEYHFESYISLTCHNCPDVVQALNMMSVLNPNITHTMIDGAAYKAEVESKNIMAVPTVYLNGESFGSGRMTLEEILAKMGSGTDASEFADKEPFDVLVVGGGPAGASAAIYTARKGIRTGVVAERFGGQVLDTMSIENFISVKATEGPKLAASLEEHVKEYDIDVMNLQRAKRLEKKDLFELELENGAVLKSKTVILSTGARWRNVNVPGEQEFKNKGVAYCPHCDGPLFEGKDVAVIGGGNSGIEAAIDLAGIVNHVTVLEFAPELKADEVLQKRLYSLPNVTVVKNAQTKEITGDQSVNGITYVDRETGEEKHVELQGVFVQIGLVPNTEWLEGTVERNRMGEIIVDKHGATSVPGLFAAGDCTDSAYNQIIISMGSGATAALGAFDYLIRN.

Residues 1–183 (MVLDANIKAQ…YLNGESFGSG (183 aa)) form a membrane-binding region. The segment at 184-509 (RMTLEEILAK…LGAFDYLIRN (326 aa)) is catalytic. 210-241 (DVLVVGGGPAGASAAIYTARKGIRTGVVAERF) contacts FAD. A disulfide bridge connects residues Cys-337 and Cys-340. An NAD(+)-binding site is contributed by 349-379 (DVAVIGGGNSGIEAAIDLAGIVNHVTVLEFA). 469–479 (TSVPGLFAAGD) serves as a coordination point for FAD.

This sequence belongs to the class-II pyridine nucleotide-disulfide oxidoreductase family. In terms of assembly, homodimer. FAD serves as cofactor.

The protein localises to the cell membrane. The catalysed reaction is a ubiquinone + NADH + 5 H(+)(in) = a ubiquinol + NAD(+) + 4 H(+)(out). Its function is as follows. Transfer of electrons from NADH to the respiratory chain. The immediate electron acceptor for the enzyme is believed to be ubiquinone. This chain is NADH dehydrogenase (ahpF), found in Bacillus subtilis (strain 168).